The following is a 106-amino-acid chain: MVNVPKTRRTFCKKCGKHQPHKVTQYKKGKDSLYAQGRRRYDRKRSGYGGQTKPIFRKKAKTTKKIVLRLECVEPNCRSKRMLAIKRCKHFELGGDKKRKGQVIQF.

A disordered region spans residues 34 to 53 (YAQGRRRYDRKRSGYGGQTK). K53 is modified (N6-methyllysine).

It belongs to the eukaryotic ribosomal protein eL42 family.

The protein localises to the cytoplasm. This Pongo abelii (Sumatran orangutan) protein is Large ribosomal subunit protein eL42 (RPL36AL).